The sequence spans 176 residues: MNKRDELIGLCIDFLAKVKDKTANANIERWLNENYGPDSETYQKISTLVIDGVAEGWAANDEISGPHYRRSRLCEPCAETFYFSITAVYMDSKGHELDNQQRTFRGDYHSHPYGELNMVIPLDEGAVLAGPLGWQGAGWTAPAPGSQHYPEVKNGALIAFFFLPAGRISYDFQAQG.

Belongs to the PnbB family.

The enzyme catalyses 4-hydroxylaminobenzoate + H2O + H(+) = 3,4-dihydroxybenzoate + NH4(+). Lyase involved in the degradation of nitroaromatic compounds. Catalyzes the conversion of 4-hydroxylaminobenzoate to 3,4-dihydroxybenzoate (protocatechuate). Required for the catabolism of 4-nitrotoluene. The sequence is that of 4-hydroxylaminobenzoate lyase from Pseudomonas putida (Arthrobacter siderocapsulatus).